The chain runs to 380 residues: Queuine tRNA-ribosyltransferase (380 aa).

The Proton acceptor role is filled by Asp93. Residues 93–97, Asp147, Gln198, and Gly225 each bind substrate; that span reads DSGGF. Positions 256 to 262 are RNA binding; the sequence is GVGLPSN. Catalysis depends on Asp275, which acts as the Nucleophile. Residues 280 to 284 are RNA binding; important for wobble base 34 recognition; it reads ARNGR. Positions 313, 315, 318, and 344 each coordinate Zn(2+).

Belongs to the queuine tRNA-ribosyltransferase family. As to quaternary structure, homodimer. Within each dimer, one monomer is responsible for RNA recognition and catalysis, while the other monomer binds to the replacement base PreQ1. Requires Zn(2+) as cofactor.

The enzyme catalyses 7-aminomethyl-7-carbaguanine + guanosine(34) in tRNA = 7-aminomethyl-7-carbaguanosine(34) in tRNA + guanine. Its pathway is tRNA modification; tRNA-queuosine biosynthesis. In terms of biological role, catalyzes the base-exchange of a guanine (G) residue with the queuine precursor 7-aminomethyl-7-deazaguanine (PreQ1) at position 34 (anticodon wobble position) in tRNAs with GU(N) anticodons (tRNA-Asp, -Asn, -His and -Tyr). Catalysis occurs through a double-displacement mechanism. The nucleophile active site attacks the C1' of nucleotide 34 to detach the guanine base from the RNA, forming a covalent enzyme-RNA intermediate. The proton acceptor active site deprotonates the incoming PreQ1, allowing a nucleophilic attack on the C1' of the ribose to form the product. After dissociation, two additional enzymatic reactions on the tRNA convert PreQ1 to queuine (Q), resulting in the hypermodified nucleoside queuosine (7-(((4,5-cis-dihydroxy-2-cyclopenten-1-yl)amino)methyl)-7-deazaguanosine). This is Queuine tRNA-ribosyltransferase from Clostridium perfringens (strain 13 / Type A).